Consider the following 856-residue polypeptide: DNA mismatch repair protein MutS (856 aa).

Position 618–625 (618–625 (GPNMGGKS)) interacts with ATP.

This sequence belongs to the DNA mismatch repair MutS family.

Functionally, this protein is involved in the repair of mismatches in DNA. It is possible that it carries out the mismatch recognition step. This protein has a weak ATPase activity. This Shewanella baltica (strain OS185) protein is DNA mismatch repair protein MutS.